The chain runs to 239 residues: Aspartate/glutamate leucyltransferase (239 aa).

Belongs to the R-transferase family. Bpt subfamily.

It is found in the cytoplasm. It carries out the reaction N-terminal L-glutamyl-[protein] + L-leucyl-tRNA(Leu) = N-terminal L-leucyl-L-glutamyl-[protein] + tRNA(Leu) + H(+). The catalysed reaction is N-terminal L-aspartyl-[protein] + L-leucyl-tRNA(Leu) = N-terminal L-leucyl-L-aspartyl-[protein] + tRNA(Leu) + H(+). Functionally, functions in the N-end rule pathway of protein degradation where it conjugates Leu from its aminoacyl-tRNA to the N-termini of proteins containing an N-terminal aspartate or glutamate. This Campylobacter jejuni subsp. jejuni serotype O:23/36 (strain 81-176) protein is Aspartate/glutamate leucyltransferase.